Consider the following 215-residue polypeptide: Ion-translocating oxidoreductase complex subunit G (215 aa).

Residues 9 to 29 form a helical membrane-spanning segment; the sequence is GLLLSGFALICTAAVALVNEA. Position 176 is an FMN phosphoryl threonine (Thr-176).

This sequence belongs to the RnfG family. As to quaternary structure, the complex is composed of six subunits: RnfA, RnfB, RnfC, RnfD, RnfE and RnfG. The cofactor is FMN.

Its subcellular location is the cell inner membrane. Part of a membrane-bound complex that couples electron transfer with translocation of ions across the membrane. This chain is Ion-translocating oxidoreductase complex subunit G, found in Shewanella amazonensis (strain ATCC BAA-1098 / SB2B).